Here is a 134-residue protein sequence, read N- to C-terminus: T-cell receptor beta chain V region CTL-F3 (134 aa).

The N-terminal stretch at 1–19 is a signal peptide; that stretch reads MAPRLLFCLVLCFLRAEPT. Residues 20 to 115 are v segment; sequence NAGVIQTPRH…SAVYLCASSL (96 aa). Cysteine 42 and cysteine 111 are disulfide-bonded. Asparagine 90 is a glycosylation site (N-linked (GlcNAc...) asparagine). Residues 116–119 form a d segment region; that stretch reads STGV. Residues 120–134 form a j segment region; that stretch reads SYEQYFGPGTRLTVL.

The sequence is that of T-cell receptor beta chain V region CTL-F3 from Mus musculus (Mouse).